The sequence spans 622 residues: Membrane protein insertase YidC (622 aa).

Residues 6–26 (IVLLIIFSTSLLFLWDAWVKE) form a helical membrane-spanning segment. Residues 47–87 (TQSKNNDGLPIPGSELTASQTGSDLNGIPSSGDTADSVTPR) form a disordered region. Positions 62 to 83 (LTASQTGSDLNGIPSSGDTADS) are enriched in polar residues. The next 3 helical transmembrane spans lie at 381 to 401 (WGIA…PLSA), 451 to 471 (FPIL…LAAV), and 525 to 545 (PVAF…YSLV). Positions 563–622 (TAPSQDAPESPASKDAPELPVSNQVINDSENTEAPASGPADSPKKPVNIPRRMHKRTRKK) are disordered. Residues 583-596 (VSNQVINDSENTEA) show a composition bias toward polar residues. Over residues 613–622 (RRMHKRTRKK) the composition is skewed to basic residues.

The protein belongs to the OXA1/ALB3/YidC family. Type 1 subfamily. As to quaternary structure, interacts with the Sec translocase complex via SecD. Specifically interacts with transmembrane segments of nascent integral membrane proteins during membrane integration.

It is found in the cell inner membrane. Functionally, required for the insertion and/or proper folding and/or complex formation of integral membrane proteins into the membrane. Involved in integration of membrane proteins that insert both dependently and independently of the Sec translocase complex, as well as at least some lipoproteins. Aids folding of multispanning membrane proteins. This chain is Membrane protein insertase YidC, found in Nitrosomonas eutropha (strain DSM 101675 / C91 / Nm57).